Reading from the N-terminus, the 851-residue chain is Putative serine/threonine-protein kinase 019R (851 aa).

5 disordered regions span residues M1–K24, P61–P91, G104–G160, G190–S216, and S340–R400. Over residues A125–E141 the composition is skewed to low complexity. Residues S196–S216 show a composition bias toward basic residues. Over residues S340–S366 the composition is skewed to low complexity. The region spanning A456 to M851 is the Protein kinase domain. Residues I462 to V470 and K485 contribute to the ATP site. D608 acts as the Proton acceptor in catalysis.

Belongs to the protein kinase superfamily. Ser/Thr protein kinase family.

It carries out the reaction L-seryl-[protein] + ATP = O-phospho-L-seryl-[protein] + ADP + H(+). It catalyses the reaction L-threonyl-[protein] + ATP = O-phospho-L-threonyl-[protein] + ADP + H(+). This chain is Putative serine/threonine-protein kinase 019R, found in Dryophytes versicolor (chameleon treefrog).